Here is a 179-residue protein sequence, read N- to C-terminus: Transcription factor 21 (179 aa).

Positions 20-87 (CDGLKMDSNK…QVQRNAANAR (68 aa)) are disordered. Positions 33–46 (TSNESTEESSNCEN) are enriched in low complexity. Residues 70–80 (SGVSQEGKQVQ) show a composition bias toward polar residues. A bHLH domain is found at 79-131 (VQRNAANARERARMRVLSKAFSRLKTTLPWVPPDTKLSKLDTLRLASSYIAHL).

As to quaternary structure, efficient DNA binding requires dimerization with another bHLH protein. Forms a heterodimer with TCF3 and binds the E box (5'-CANNTG-3').

The protein localises to the nucleus. Functionally, involved in epithelial-mesenchymal interactions in kidney and lung morphogenesis that include epithelial differentiation and branching morphogenesis. May play a role in the specification or differentiation of one or more subsets of epicardial cell types. This chain is Transcription factor 21 (TCF21), found in Homo sapiens (Human).